The chain runs to 1168 residues: Transcription-repair-coupling factor (1168 aa).

The Helicase ATP-binding domain occupies 633-794 (DMQKSRPMDR…MLGVRDLSVI (162 aa)). 646-653 (GDVGYGKT) is a binding site for ATP. Positions 747–750 (DEEQ) match the DEEQ box motif. Residues 808–969 (VLEQNMSFIK…GFKIAMRDLN (162 aa)) form the Helicase C-terminal domain.

In the N-terminal section; belongs to the UvrB family. The protein in the C-terminal section; belongs to the helicase family. RecG subfamily.

The protein resides in the cytoplasm. In terms of biological role, couples transcription and DNA repair by recognizing RNA polymerase (RNAP) stalled at DNA lesions. Mediates ATP-dependent release of RNAP and its truncated transcript from the DNA, and recruitment of nucleotide excision repair machinery to the damaged site. The polypeptide is Transcription-repair-coupling factor (Staphylococcus aureus (strain MSSA476)).